We begin with the raw amino-acid sequence, 119 residues long: Anther-specific protein BCP1 (119 aa).

The N-terminal stretch at 1–23 (MGRQNVVVVFGLVFLAVLGLAAA) is a signal peptide. The span at 24–42 (ASSPSPSASPSKAPSTSTP) shows a compositional bias: low complexity. Positions 24 to 95 (ASSPSPSASP…PSGSADSADS (72 aa)) are disordered. The Extracellular segment spans residues 24-98 (ASSPSPSASP…SADSADSGAA (75 aa)). The span at 56–69 (TDDDAAASPGDDDV) shows a compositional bias: acidic residues. Residues 82-95 (GSNGPSGSADSADS) are compositionally biased toward low complexity. The chain crosses the membrane as a helical span at residues 99–118 (ALGVSAVVVGVTSIVGSFLF). Phenylalanine 119 is a topological domain (cytoplasmic).

In terms of tissue distribution, expressed in mature pollen grains, developing microspores and tapetal cells.

It localises to the membrane. Functionally, required for pollen fertility and development. Active in both diploid tapetum and haploid microspores. Major pollen protein. This is Anther-specific protein BCP1 (BCP1) from Brassica campestris (Field mustard).